Reading from the N-terminus, the 245-residue chain is Small ribosomal subunit protein uS2 (245 aa).

Belongs to the universal ribosomal protein uS2 family.

The polypeptide is Small ribosomal subunit protein uS2 (Dehalococcoides mccartyi (strain CBDB1)).